Reading from the N-terminus, the 123-residue chain is MARIAGIDLPRDKRIAIALTYIFGIGRPTADKILAETGINPDTRTRDLTDEEVARLREYIDKNVEVEGDLRREISLNIKRLMEIGCYRGLRHRRGLPVRGQRTKTNARTRKGPARTVAGKKKK.

A disordered region spans residues 95–123; that stretch reads GLPVRGQRTKTNARTRKGPARTVAGKKKK.

It belongs to the universal ribosomal protein uS13 family. Part of the 30S ribosomal subunit. Forms a loose heterodimer with protein S19. Forms two bridges to the 50S subunit in the 70S ribosome.

In terms of biological role, located at the top of the head of the 30S subunit, it contacts several helices of the 16S rRNA. In the 70S ribosome it contacts the 23S rRNA (bridge B1a) and protein L5 of the 50S subunit (bridge B1b), connecting the 2 subunits; these bridges are implicated in subunit movement. Contacts the tRNAs in the A and P-sites. In Heliobacterium modesticaldum (strain ATCC 51547 / Ice1), this protein is Small ribosomal subunit protein uS13.